Reading from the N-terminus, the 465-residue chain is ATP synthase subunit beta (465 aa).

ATP is bound at residue 153–160 (GGAGVGKT).

This sequence belongs to the ATPase alpha/beta chains family. As to quaternary structure, F-type ATPases have 2 components, CF(1) - the catalytic core - and CF(0) - the membrane proton channel. CF(1) has five subunits: alpha(3), beta(3), gamma(1), delta(1), epsilon(1). CF(0) has three main subunits: a(1), b(2) and c(9-12). The alpha and beta chains form an alternating ring which encloses part of the gamma chain. CF(1) is attached to CF(0) by a central stalk formed by the gamma and epsilon chains, while a peripheral stalk is formed by the delta and b chains.

The protein localises to the cell membrane. The enzyme catalyses ATP + H2O + 4 H(+)(in) = ADP + phosphate + 5 H(+)(out). Functionally, produces ATP from ADP in the presence of a proton gradient across the membrane. The catalytic sites are hosted primarily by the beta subunits. The polypeptide is ATP synthase subunit beta (Clostridium perfringens (strain SM101 / Type A)).